Here is a 355-residue protein sequence, read N- to C-terminus: tRNA-specific 2-thiouridylase MnmA (355 aa).

ATP is bound by residues 6–13 (AMSGGVDS) and Met32. Residue Cys93 is the Nucleophile of the active site. A disulfide bond links Cys93 and Cys191. Gly117 provides a ligand contact to ATP. The tract at residues 140–142 (KDQ) is interaction with tRNA. The active-site Cysteine persulfide intermediate is Cys191. Residues 296-297 (RY) form an interaction with tRNA region.

The protein belongs to the MnmA/TRMU family.

It is found in the cytoplasm. It carries out the reaction S-sulfanyl-L-cysteinyl-[protein] + uridine(34) in tRNA + AH2 + ATP = 2-thiouridine(34) in tRNA + L-cysteinyl-[protein] + A + AMP + diphosphate + H(+). Functionally, catalyzes the 2-thiolation of uridine at the wobble position (U34) of tRNA, leading to the formation of s(2)U34. The protein is tRNA-specific 2-thiouridylase MnmA of Pelobacter propionicus (strain DSM 2379 / NBRC 103807 / OttBd1).